The chain runs to 291 residues: GTP-binding protein RHO4 (291 aa).

The segment covering 14-31 (GNESNIVSQGSPSSSNLP) has biased composition (polar residues). The segment at 14–45 (GNESNIVSQGSPSSSNLPESPGTLDEKNLPRL) is disordered. 79–86 (GDGAVGKT) lines the GTP pocket. The Effector region signature appears at 101–109 (YIPTIFENY). Residues 127-131 (DTAGQ) and 185-188 (LKSD) contribute to the GTP site. Positions 250 to 273 (THTIKNPFKRNTTRSDIDSSTGDT) are disordered. Phosphoserine is present on residues Ser-264, Ser-268, and Ser-276. The residue at position 288 (Cys-288) is a Cysteine methyl ester. Cys-288 carries the S-farnesyl cysteine lipid modification. A propeptide spans 289 to 291 (IIM) (removed in mature form).

Belongs to the small GTPase superfamily. Rho family. In terms of assembly, interacts with BEM4.

Its subcellular location is the cell membrane. The enzyme catalyses GTP + H2O = GDP + phosphate + H(+). Its function is as follows. Plays an important role in cell growth. Required to keep the uninucleated state. May be involved in the organization of the cytoskeleton which affects microtubule functions. Most likely RHO3 and RHO4 of S.cerevisiae regulate partially overlapping but different pathways. This Saccharomyces cerevisiae (strain ATCC 204508 / S288c) (Baker's yeast) protein is GTP-binding protein RHO4 (RHO4).